A 59-amino-acid polypeptide reads, in one-letter code: Prokaryotic ubiquitin-like protein UBact (59 aa).

The interval 1–59 (MEMTDPLRREEKKESSPDPKEESGPSRPDVSRPGRDSLLKRMKKVDPKQSEKYKQRTGQ) is disordered. A Deamidated glutamine modification is found at Gln59. Gln59 participates in a covalent cross-link: Isoglutamyl lysine isopeptide (Gln-Lys) (interchain with K-? in acceptor proteins).

The protein belongs to the ubiquitin-like protein UBact family. May be modified by deamidation of its C-terminal glutamine to glutamate by the adjacently encoded deamidase. This could be a prerequisite to the subsequent conjugation, as shown in the other prokaryotic ubiquitin-like protein Pup.

May function as a protein modifier covalently attached to lysine residues of substrate proteins. This may serve to target the modified proteins for degradation by proteasomes. This chain is Prokaryotic ubiquitin-like protein UBact, found in Nitrospina gracilis (strain 3/211).